A 72-amino-acid polypeptide reads, in one-letter code: Heat shock factor-binding protein 1-like protein 1 (72 aa).

Residues 12–62 adopt a coiled-coil conformation; the sequence is DLLQNAAENLLLEVEEHFQALTTTLNLRMEEMGSRIEDLQRNVDDLMTQAG.

The protein belongs to the HSBP1 family.

The polypeptide is Heat shock factor-binding protein 1-like protein 1 (Hsbp1l1) (Mus musculus (Mouse)).